Reading from the N-terminus, the 98-residue chain is Aspartyl/glutamyl-tRNA(Asn/Gln) amidotransferase subunit C (98 aa).

The protein belongs to the GatC family. Heterotrimer of A, B and C subunits.

It carries out the reaction L-glutamyl-tRNA(Gln) + L-glutamine + ATP + H2O = L-glutaminyl-tRNA(Gln) + L-glutamate + ADP + phosphate + H(+). It catalyses the reaction L-aspartyl-tRNA(Asn) + L-glutamine + ATP + H2O = L-asparaginyl-tRNA(Asn) + L-glutamate + ADP + phosphate + 2 H(+). Its function is as follows. Allows the formation of correctly charged Asn-tRNA(Asn) or Gln-tRNA(Gln) through the transamidation of misacylated Asp-tRNA(Asn) or Glu-tRNA(Gln) in organisms which lack either or both of asparaginyl-tRNA or glutaminyl-tRNA synthetases. The reaction takes place in the presence of glutamine and ATP through an activated phospho-Asp-tRNA(Asn) or phospho-Glu-tRNA(Gln). The polypeptide is Aspartyl/glutamyl-tRNA(Asn/Gln) amidotransferase subunit C (Gloeothece citriformis (strain PCC 7424) (Cyanothece sp. (strain PCC 7424))).